Reading from the N-terminus, the 1138-residue chain is Tyrosine-protein kinase receptor Tie-1 (1138 aa).

The N-terminal stretch at 1 to 21 (MVWRVPPFLLPILFLASHVGA) is a signal peptide. Residues 22–759 (AVDLTLLANL…SRAAEEGLDQ (738 aa)) are Extracellular-facing. The Ig-like C2-type 1 domain maps to 43–105 (CVSGEAGAGR…PSDLVGVFSC (63 aa)). 2 N-linked (GlcNAc...) asparagine glycosylation sites follow: N83 and N161. EGF-like domains lie at 214–256 (GCGA…TRCE), 258–303 (ACRE…SQCQ), and 305–345 (ACAP…VHCE). Disulfide bonds link C228–C237, C231–C244, and C246–C255. Cystine bridges form between C315–C327, C321–C333, and C335–C344. An Ig-like C2-type 2 domain is found at 372-426 (CAAAGNPFPVRGSIELRKPDGTVLLSTKAIVEPEKTTAEFEVPRLVLADSGFWEC). 3 consecutive Fibronectin type-III domains span residues 446-545 (PPVP…CPEP), 548-642 (QPWL…LPPS), and 646-739 (APRH…TLGN). 3 N-linked (GlcNAc...) asparagine glycosylation sites follow: N503, N596, and N709. The chain crosses the membrane as a helical span at residues 760 to 784 (QLILAVVGSVSATCLTILAALLTLV). Topologically, residues 785-1138 (CIRRSCLHRR…AGIDATAEEA (354 aa)) are cytoplasmic. A Protein kinase domain is found at 839–1118 (ITFEDLIGEG…RMLEARKAYV (280 aa)). Residues 845–853 (IGEGNFGQV) and K870 each bind ATP. The active-site Proton acceptor is D979. Y1007 carries the post-translational modification Phosphotyrosine; by autocatalysis.

This sequence belongs to the protein kinase superfamily. Tyr protein kinase family. Tie subfamily. In terms of assembly, heterodimer with TEK/TIE2. Interacts with SVEP1 (via C-terminus). Phosphorylated on tyrosine residues in response to ANGPT1, most likely by TEK/TIE2. In terms of tissue distribution, specifically expressed in developing vascular endothelial cells.

The protein localises to the cell membrane. The catalysed reaction is L-tyrosyl-[protein] + ATP = O-phospho-L-tyrosyl-[protein] + ADP + H(+). Its function is as follows. Transmembrane tyrosine-protein kinase that may modulate TEK/TIE2 activity and contribute to the regulation of angiogenesis. This is Tyrosine-protein kinase receptor Tie-1 (TIE1) from Homo sapiens (Human).